A 773-amino-acid polypeptide reads, in one-letter code: DNA gyrase subunit B (773 aa).

Positions 416 to 530 constitute a Toprim domain; that stretch reads SEIFLVEGDS…QGHVYIAQAP (115 aa). 3 residues coordinate Mg(2+): Glu-422, Asp-495, and Asp-497.

The protein belongs to the type II topoisomerase GyrB family. As to quaternary structure, heterotetramer, composed of two GyrA and two GyrB chains. In the heterotetramer, GyrA contains the active site tyrosine that forms a transient covalent intermediate with DNA, while GyrB binds cofactors and catalyzes ATP hydrolysis. Mg(2+) is required as a cofactor. It depends on Mn(2+) as a cofactor. Ca(2+) serves as cofactor.

It is found in the cytoplasm. It catalyses the reaction ATP-dependent breakage, passage and rejoining of double-stranded DNA.. Its function is as follows. A type II topoisomerase that negatively supercoils closed circular double-stranded (ds) DNA in an ATP-dependent manner to modulate DNA topology and maintain chromosomes in an underwound state. Negative supercoiling favors strand separation, and DNA replication, transcription, recombination and repair, all of which involve strand separation. Also able to catalyze the interconversion of other topological isomers of dsDNA rings, including catenanes and knotted rings. Type II topoisomerases break and join 2 DNA strands simultaneously in an ATP-dependent manner. The protein is DNA gyrase subunit B of Helicobacter pylori (strain ATCC 700392 / 26695) (Campylobacter pylori).